We begin with the raw amino-acid sequence, 271 residues long: Shikimate dehydrogenase (NADP(+)) (271 aa).

Shikimate-binding positions include 16 to 18 (SRS) and threonine 63. Residue lysine 67 is the Proton acceptor of the active site. 2 residues coordinate shikimate: asparagine 88 and aspartate 104. NADP(+) is bound by residues 128 to 132 (GAGGA), 152 to 157 (NRTASK), and methionine 215. Tyrosine 217 is a shikimate binding site. Glycine 238 lines the NADP(+) pocket.

Belongs to the shikimate dehydrogenase family. In terms of assembly, homodimer.

It catalyses the reaction shikimate + NADP(+) = 3-dehydroshikimate + NADPH + H(+). It functions in the pathway metabolic intermediate biosynthesis; chorismate biosynthesis; chorismate from D-erythrose 4-phosphate and phosphoenolpyruvate: step 4/7. Functionally, involved in the biosynthesis of the chorismate, which leads to the biosynthesis of aromatic amino acids. Catalyzes the reversible NADPH linked reduction of 3-dehydroshikimate (DHSA) to yield shikimate (SA). The polypeptide is Shikimate dehydrogenase (NADP(+)) (Chromohalobacter salexigens (strain ATCC BAA-138 / DSM 3043 / CIP 106854 / NCIMB 13768 / 1H11)).